A 369-amino-acid polypeptide reads, in one-letter code: Outer membrane protein P2 (369 aa).

The first 20 residues, 1-20, serve as a signal peptide directing secretion; that stretch reads MKKTLAALIVGAFAASAANA.

Belongs to the Gram-negative porin family. In terms of assembly, homotrimer.

The protein resides in the cell outer membrane. Forms pores that allow passive diffusion of small molecules across the outer membrane. This is Outer membrane protein P2 (ompP2) from Haemophilus influenzae.